A 99-amino-acid chain; its full sequence is Integration host factor subunit alpha (99 aa).

This sequence belongs to the bacterial histone-like protein family. In terms of assembly, heterodimer of an alpha and a beta chain.

In terms of biological role, this protein is one of the two subunits of integration host factor, a specific DNA-binding protein that functions in genetic recombination as well as in transcriptional and translational control. In Psychrobacter cryohalolentis (strain ATCC BAA-1226 / DSM 17306 / VKM B-2378 / K5), this protein is Integration host factor subunit alpha.